The primary structure comprises 1587 residues: Sister chromatid cohesion protein mis4 (1587 aa).

The segment at 140–172 (PKEKPDASSINTNRSSSDNGFLTPSSSPRSPSC) is disordered. The span at 147-162 (SSINTNRSSSDNGFLT) shows a compositional bias: polar residues. Low complexity predominate over residues 163 to 172 (PSSSPRSPSC). Serine 183 is subject to Phosphoserine. HEAT repeat units lie at residues 775 to 812 (LNLK…IPSI), 814 to 851 (RTHP…AYRE), 853 to 888 (IPQI…ATED), 890 to 927 (NIRV…SPAS), 1101 to 1140 (ATLM…ARHS), and 1183 to 1220 (DAYV…RETS).

Belongs to the SCC2/Nipped-B family. As to quaternary structure, interacts with ssl3.

Its subcellular location is the nucleus. It localises to the chromosome. In terms of biological role, plays a structural role in chromatin. Chromatid cohesion molecule required for equal sister chromatid separation in anaphase. May form a stable link between chromatids in S phase that is split rather than removed in anaphase. Also required for spindle-kinetochore interaction in early mitosis and inhibit sister chromatid separation until the cleavage of Rad21 in anaphase. This Schizosaccharomyces pombe (strain 972 / ATCC 24843) (Fission yeast) protein is Sister chromatid cohesion protein mis4 (mis4).